Here is a 242-residue protein sequence, read N- to C-terminus: MSGHSKWSNIQGRKNAQDAKRGKIFQKVSREIYMAAKAGGPDPAMNPALRLAVDKAKSANMPNDNIARAIKKASSAGEGEHYDEVTYEGYGPGGVAVLVHALTDNRNRTATNVRVAFTRNGGSLGETGSVNYMFDRKGYIVIKREDHAIEEDDMLEVVLEAGGEDIETSPEVFEIYTAPEDFTAVRDALEQAGYSLAQAELTMVPQTLLTLNDEQKAQLERLVDKLEDDDDVSEVFTSAENL.

Polar residues predominate over residues 1–14; sequence MSGHSKWSNIQGRK. The tract at residues 1 to 22 is disordered; it reads MSGHSKWSNIQGRKNAQDAKRG.

The protein belongs to the TACO1 family.

It localises to the cytoplasm. The sequence is that of Probable transcriptional regulatory protein EF_0663 from Enterococcus faecalis (strain ATCC 700802 / V583).